A 95-amino-acid polypeptide reads, in one-letter code: Small ribosomal subunit protein bS6 (95 aa).

It belongs to the bacterial ribosomal protein bS6 family.

In terms of biological role, binds together with bS18 to 16S ribosomal RNA. In Caldanaerobacter subterraneus subsp. tengcongensis (strain DSM 15242 / JCM 11007 / NBRC 100824 / MB4) (Thermoanaerobacter tengcongensis), this protein is Small ribosomal subunit protein bS6.